A 382-amino-acid chain; its full sequence is NADH-ubiquinone oxidoreductase chain 2 (382 aa).

12 helical membrane-spanning segments follow: residues 1-21 (MIELDLCFGLLLLILFGLLSL), 33-53 (FICQCWLVMITPLEVQDFALC), 54-74 (ILTVVLLQSFHSFEALLFLLL), 88-108 (LVSFYVCLEAQTLCVVVLCGL), 123-143 (LKFLLLSAMVSGMALFWFSAM), 158-178 (FWILLVMLFKLGVAPMHMWSV), 188-208 (LLLYLSTAPKLSLFTFWASSW), 212-232 (FSVGVFILFSMFIGSIGAYGQ), 239-259 (FAYSTINEIGLLLLAVETAGF), 260-280 (HTLYQHLGIYIITQLLLWNLT), 284-304 (LFALCAVSLAGLPPFAGFFGK), and 305-325 (AWIFWHAMSVQAFSLLAAALF).

It belongs to the complex I subunit 2 family.

The protein localises to the mitochondrion inner membrane. It catalyses the reaction a ubiquinone + NADH + 5 H(+)(in) = a ubiquinol + NAD(+) + 4 H(+)(out). Functionally, core subunit of the mitochondrial membrane respiratory chain NADH dehydrogenase (Complex I) that is believed to belong to the minimal assembly required for catalysis. Complex I functions in the transfer of electrons from NADH to the respiratory chain. The immediate electron acceptor for the enzyme is believed to be ubiquinone. The chain is NADH-ubiquinone oxidoreductase chain 2 (ND2) from Chlamydomonas reinhardtii (Chlamydomonas smithii).